The chain runs to 307 residues: Aspartate carbamoyltransferase catalytic subunit (307 aa).

Residues Arg-59 and Thr-60 each coordinate carbamoyl phosphate. Lys-87 contributes to the L-aspartate binding site. The carbamoyl phosphate site is built by Arg-109, His-137, and Gln-140. 2 residues coordinate L-aspartate: Arg-173 and Arg-223. Residues Gly-266 and Pro-267 each coordinate carbamoyl phosphate.

Belongs to the aspartate/ornithine carbamoyltransferase superfamily. ATCase family. As to quaternary structure, heterododecamer (2C3:3R2) of six catalytic PyrB chains organized as two trimers (C3), and six regulatory PyrI chains organized as three dimers (R2).

It catalyses the reaction carbamoyl phosphate + L-aspartate = N-carbamoyl-L-aspartate + phosphate + H(+). The protein operates within pyrimidine metabolism; UMP biosynthesis via de novo pathway; (S)-dihydroorotate from bicarbonate: step 2/3. In terms of biological role, catalyzes the condensation of carbamoyl phosphate and aspartate to form carbamoyl aspartate and inorganic phosphate, the committed step in the de novo pyrimidine nucleotide biosynthesis pathway. This is Aspartate carbamoyltransferase catalytic subunit from Helicobacter pylori (strain ATCC 700392 / 26695) (Campylobacter pylori).